We begin with the raw amino-acid sequence, 459 residues long: tRNA uridine(34) acetyltransferase (459 aa).

The tract at residues 1–278 (MKKLSRTISG…VPPYVRISRV (278 aa)) is radical S-adenosyl-L-methionine (rSAM). The 266-residue stretch at 6–271 (RTISGVTPVA…IADIKALVPP (266 aa)) folds into the Radical SAM core domain. [4Fe-4S] cluster-binding residues include Cys-23, Cys-27, and Cys-30. Lys-77 provides a ligand contact to acetyl-CoA. Residues 308 to 459 (QKCRCIRCRE…VAGYMCKHLD (152 aa)) are N-acetyltransferase. Residues Cys-310, Cys-312, and Cys-315 each contribute to the Zn(2+) site. Acetyl-CoA is bound by residues 386 to 389 (ELHV), 409 to 411 (LGR), and Tyr-442.

Belongs to the ELP3 family. In terms of assembly, homodimer. [4Fe-4S] cluster serves as cofactor.

The enzyme catalyses uridine(34) in tRNA + acetyl-CoA + S-adenosyl-L-methionine + H2O = 5-(carboxymethyl)uridine(34) in tRNA + 5'-deoxyadenosine + L-methionine + CoA + 2 H(+). Its pathway is tRNA modification. TRNA uridine(34) acetyltransferase, which mediates formation of carboxymethyluridine in the wobble base at position 34 in tRNAs. The proposed mechanism is the following: (i) recruits S-adenosyl-L-methionine and cleaves it to generate a 5'-deoxyadenosine radical (5'-dA) in the radical S-adenosyl-L-methionine (rSAM) region, (ii) hydrolyzes acetyl-CoA in the N-acetyltransferase domain and (iii) an acetyl radical is formed by the products of the two domains and (iv) is transferred onto the C5 position of uridine(34) in the bound tRNA molecule. Does not show protein lysine acetyltransferase activity. The protein is tRNA uridine(34) acetyltransferase of Dehalococcoides mccartyi (strain CBDB1).